We begin with the raw amino-acid sequence, 491 residues long: 3-octaprenyl-4-hydroxybenzoate carboxy-lyase (491 aa).

Position 172 (N172) interacts with Mn(2+). Prenylated FMN contacts are provided by residues 175–177, 189–191, and 194–195; these read IYR, RWL, and RG. E238 is a Mn(2+) binding site. Catalysis depends on D287, which acts as the Proton donor.

The protein belongs to the UbiD family. Homohexamer. The cofactor is prenylated FMN. Mn(2+) is required as a cofactor.

The protein resides in the cell membrane. It catalyses the reaction a 4-hydroxy-3-(all-trans-polyprenyl)benzoate + H(+) = a 2-(all-trans-polyprenyl)phenol + CO2. Its pathway is cofactor biosynthesis; ubiquinone biosynthesis. Functionally, catalyzes the decarboxylation of 3-octaprenyl-4-hydroxy benzoate to 2-octaprenylphenol, an intermediate step in ubiquinone biosynthesis. In Klebsiella pneumoniae subsp. pneumoniae (strain ATCC 700721 / MGH 78578), this protein is 3-octaprenyl-4-hydroxybenzoate carboxy-lyase.